The following is an 876-amino-acid chain: Alanine--tRNA ligase (876 aa).

Lys74 is modified (N6-acetyllysine). Zn(2+) is bound by residues His564, His568, Cys666, and His670.

The protein belongs to the class-II aminoacyl-tRNA synthetase family. As to quaternary structure, homotetramer. The cofactor is Zn(2+).

The protein localises to the cytoplasm. The catalysed reaction is tRNA(Ala) + L-alanine + ATP = L-alanyl-tRNA(Ala) + AMP + diphosphate. Catalyzes the attachment of alanine to tRNA(Ala) in a two-step reaction: alanine is first activated by ATP to form Ala-AMP and then transferred to the acceptor end of tRNA(Ala). Also edits incorrectly charged Ser-tRNA(Ala) and Gly-tRNA(Ala) via its editing domain. In Shigella sonnei (strain Ss046), this protein is Alanine--tRNA ligase.